A 220-amino-acid polypeptide reads, in one-letter code: Coat protein TP4 (220 aa).

Its subcellular location is the virion. The sequence is that of Coat protein TP4 from Thermoproteus tenax (TTV1).